The following is a 546-amino-acid chain: Oncoprotein-induced transcript 3 protein (546 aa).

The N-terminal stretch at 1–16 (MPLSLLLACLFTTVTL) is a signal peptide. Residues N89 and N116 are each glycosylated (N-linked (GlcNAc...) asparagine). Residues 182-222 (DENECEHNNGGCSEICVNLKNSHRCACGVGRVLRSDGKTCE) form the EGF-like; calcium-binding domain. 3 disulfide bridges follow: C186–C197, C193–C206, and C208–C221. The 256-residue stretch at 261-516 (TCQVPVLCKS…SRCAQGCHRR (256 aa)) folds into the ZP domain. N-linked (GlcNAc...) asparagine glycosylation is present at N299. The disordered stretch occupies residues 524–546 (DEDSAGLQSQTLTGGPISIDWEE).

It localises to the nucleus envelope. Functionally, may be involved in hepatocellular function and development. The polypeptide is Oncoprotein-induced transcript 3 protein (Oit3) (Rattus norvegicus (Rat)).